The primary structure comprises 610 residues: Membrane protein insertase YidC (610 aa).

Residues Phe-7–Gly-27 form a helical membrane-spanning segment. The segment at Gln-36–Gly-82 is disordered. The span at Arg-44–Ala-55 shows a compositional bias: low complexity. 5 consecutive transmembrane segments (helical) span residues Phe-358–Ile-378, Asn-387–Ala-407, Trp-458–Ile-478, Thr-510–Leu-530, and Ile-546–Val-566.

It belongs to the OXA1/ALB3/YidC family. Type 1 subfamily. As to quaternary structure, interacts with the Sec translocase complex via SecD. Specifically interacts with transmembrane segments of nascent integral membrane proteins during membrane integration.

The protein resides in the cell inner membrane. Required for the insertion and/or proper folding and/or complex formation of integral membrane proteins into the membrane. Involved in integration of membrane proteins that insert both dependently and independently of the Sec translocase complex, as well as at least some lipoproteins. Aids folding of multispanning membrane proteins. The chain is Membrane protein insertase YidC from Brucella suis biovar 1 (strain 1330).